Consider the following 198-residue polypeptide: FMN-dependent NADH:quinone oxidoreductase (198 aa).

Residues Ser10, 16-18 (SQS), 94-97 (MYNF), and 138-141 (TRGG) contribute to the FMN site.

It belongs to the azoreductase type 1 family. Homodimer. It depends on FMN as a cofactor.

The enzyme catalyses 2 a quinone + NADH + H(+) = 2 a 1,4-benzosemiquinone + NAD(+). It carries out the reaction N,N-dimethyl-1,4-phenylenediamine + anthranilate + 2 NAD(+) = 2-(4-dimethylaminophenyl)diazenylbenzoate + 2 NADH + 2 H(+). Quinone reductase that provides resistance to thiol-specific stress caused by electrophilic quinones. Its function is as follows. Also exhibits azoreductase activity. Catalyzes the reductive cleavage of the azo bond in aromatic azo compounds to the corresponding amines. This chain is FMN-dependent NADH:quinone oxidoreductase, found in Shewanella oneidensis (strain ATCC 700550 / JCM 31522 / CIP 106686 / LMG 19005 / NCIMB 14063 / MR-1).